Consider the following 264-residue polypeptide: Methionine aminopeptidase (264 aa).

His-79 provides a ligand contact to substrate. Residues Asp-97, Asp-108, and His-171 each contribute to the a divalent metal cation site. Position 178 (His-178) interacts with substrate. Residues Glu-204 and Glu-235 each contribute to the a divalent metal cation site.

Belongs to the peptidase M24A family. Methionine aminopeptidase type 1 subfamily. In terms of assembly, monomer. Co(2+) serves as cofactor. It depends on Zn(2+) as a cofactor. Requires Mn(2+) as cofactor. Fe(2+) is required as a cofactor.

The enzyme catalyses Release of N-terminal amino acids, preferentially methionine, from peptides and arylamides.. Its function is as follows. Removes the N-terminal methionine from nascent proteins. The N-terminal methionine is often cleaved when the second residue in the primary sequence is small and uncharged (Met-Ala-, Cys, Gly, Pro, Ser, Thr, or Val). Requires deformylation of the N(alpha)-formylated initiator methionine before it can be hydrolyzed. In Salmonella typhi, this protein is Methionine aminopeptidase.